Here is a 516-residue protein sequence, read N- to C-terminus: GMP synthase [glutamine-hydrolyzing] (516 aa).

Residues 8-198 (KILILDFGSQ…VVNICGCDTL (191 aa)) enclose the Glutamine amidotransferase type-1 domain. Cys84 acts as the Nucleophile in catalysis. Catalysis depends on residues His172 and Glu174. One can recognise a GMPS ATP-PPase domain in the interval 199-391 (WNIENIIEND…LGLPYNMLYR (193 aa)). 226–232 (SGGVDSS) is a binding site for ATP.

In terms of assembly, homodimer.

It carries out the reaction XMP + L-glutamine + ATP + H2O = GMP + L-glutamate + AMP + diphosphate + 2 H(+). It participates in purine metabolism; GMP biosynthesis; GMP from XMP (L-Gln route): step 1/1. In terms of biological role, catalyzes the synthesis of GMP from XMP. The polypeptide is GMP synthase [glutamine-hydrolyzing] (Francisella tularensis subsp. holarctica (strain LVS)).